Here is a 276-residue protein sequence, read N- to C-terminus: uncharacterized protein (276 aa).

The next 10 helical transmembrane spans lie at I5–V25, I31–L51, V63–V83, V89–L109, V119–I139, I142–L162, P168–P188, L200–Y220, A231–A251, and P253–V273. EamA domains follow at residues T12–E133 and V150–R274.

It belongs to the EamA transporter family.

The protein localises to the cell membrane. This is an uncharacterized protein from Archaeoglobus fulgidus (strain ATCC 49558 / DSM 4304 / JCM 9628 / NBRC 100126 / VC-16).